Reading from the N-terminus, the 828-residue chain is DNA gyrase subunit A (828 aa).

A Topo IIA-type catalytic domain is found at 32-497 (LPDVRDGLKP…EVLSLEDEDL (466 aa)). The active-site O-(5'-phospho-DNA)-tyrosine intermediate is the Tyr-120. The GyrA-box signature appears at 524-530 (QKRGGRG).

The protein belongs to the type II topoisomerase GyrA/ParC subunit family. As to quaternary structure, heterotetramer, composed of two GyrA and two GyrB chains. In the heterotetramer, GyrA contains the active site tyrosine that forms a transient covalent intermediate with DNA, while GyrB binds cofactors and catalyzes ATP hydrolysis.

Its subcellular location is the cytoplasm. It catalyses the reaction ATP-dependent breakage, passage and rejoining of double-stranded DNA.. In terms of biological role, a type II topoisomerase that negatively supercoils closed circular double-stranded (ds) DNA in an ATP-dependent manner to modulate DNA topology and maintain chromosomes in an underwound state. Negative supercoiling favors strand separation, and DNA replication, transcription, recombination and repair, all of which involve strand separation. Also able to catalyze the interconversion of other topological isomers of dsDNA rings, including catenanes and knotted rings. Type II topoisomerases break and join 2 DNA strands simultaneously in an ATP-dependent manner. The chain is DNA gyrase subunit A from Streptococcus pyogenes serotype M6 (strain ATCC BAA-946 / MGAS10394).